A 215-amino-acid chain; its full sequence is MHTVKLLCVVFSCLCAVAWASSDRQPCHSPPLISGTMKVVSTGGHDLASGEFSYDSKANKFRFVEDAAHANKTSHTDVLVHFEEGTLYEIDSKNESCKKETLQFRKHLMEIPPDATHESEIYMGSPSITEQGLRVRVWSGKLPELHAHYSLSITSCGCLPVSGSYYGDKKDLLFSFFGVETEVDDLQVFVPPAYCEGVAFEEAPDDHSFFDLFHD.

Residues 1–20 (MHTVKLLCVVFSCLCAVAWA) form the signal peptide. 2 N-linked (GlcNAc...) asparagine glycosylation sites follow: Asn-71 and Asn-94.

It belongs to the ependymin family. As to quaternary structure, forms disulfide-linked dimers. Post-translationally, different glycosylation variants are known as EPD-beta and EPD-gamma. Binds calcium through the terminal sialic acids. As to expression, EPDs are synthesized in the meninx and secreted in the cerebrospinal fluid.

It localises to the secreted. Its function is as follows. May play a role in neural plasticity. May be involved during axon regeneration. The protein is Ependymin-2 (epd2) of Carassius auratus (Goldfish).